The following is a 61-amino-acid chain: Small ribosomal subunit protein uS14 (61 aa).

Cysteine 24, cysteine 27, cysteine 40, and cysteine 43 together coordinate Zn(2+).

It belongs to the universal ribosomal protein uS14 family. Zinc-binding uS14 subfamily. In terms of assembly, part of the 30S ribosomal subunit. Contacts proteins S3 and S10. Requires Zn(2+) as cofactor.

Its function is as follows. Binds 16S rRNA, required for the assembly of 30S particles and may also be responsible for determining the conformation of the 16S rRNA at the A site. In Clostridium botulinum (strain 657 / Type Ba4), this protein is Small ribosomal subunit protein uS14.